A 232-amino-acid chain; its full sequence is Ribose-5-phosphate isomerase A (232 aa).

Substrate-binding positions include 34-37 (TGST), 89-92 (DGAD), and 102-105 (KGGG). Glu111 acts as the Proton acceptor in catalysis. Lys129 lines the substrate pocket.

The protein belongs to the ribose 5-phosphate isomerase family. As to quaternary structure, homodimer.

It carries out the reaction aldehydo-D-ribose 5-phosphate = D-ribulose 5-phosphate. It participates in carbohydrate degradation; pentose phosphate pathway; D-ribose 5-phosphate from D-ribulose 5-phosphate (non-oxidative stage): step 1/1. Catalyzes the reversible conversion of ribose-5-phosphate to ribulose 5-phosphate. The sequence is that of Ribose-5-phosphate isomerase A from Protochlamydia amoebophila (strain UWE25).